A 90-amino-acid polypeptide reads, in one-letter code: Small ribosomal subunit protein bS16 (90 aa).

The protein belongs to the bacterial ribosomal protein bS16 family.

The chain is Small ribosomal subunit protein bS16 from Lactobacillus helveticus (strain DPC 4571).